Here is a 623-residue protein sequence, read N- to C-terminus: Chaperone protein DnaK (623 aa).

Position 174 is a phosphothreonine; by autocatalysis (Thr174). Disordered stretches follow at residues 470–504 and 578–623; these read ITIK…KEEV and GGAQ…DPDK. A compositionally biased stretch (basic and acidic residues) spans 481-504; it reads EEIKKMQKDAEEHAEEDKKRKEEV. A compositionally biased stretch (low complexity) spans 578 to 604; sequence GGAQGAAGQAGPQGAQGGQPNNDNGSS. Over residues 614–623 the composition is skewed to basic and acidic residues; that stretch reads GDFHKVDPDK.

It belongs to the heat shock protein 70 family.

Functionally, acts as a chaperone. This is Chaperone protein DnaK from Lactobacillus gasseri (strain ATCC 33323 / DSM 20243 / BCRC 14619 / CIP 102991 / JCM 1131 / KCTC 3163 / NCIMB 11718 / NCTC 13722 / AM63).